We begin with the raw amino-acid sequence, 213 residues long: Methylthioribulose-1-phosphate dehydratase (213 aa).

Zn(2+)-binding residues include His-97 and His-99.

Belongs to the aldolase class II family. MtnB subfamily. In terms of assembly, homotetramer. It depends on Zn(2+) as a cofactor.

The enzyme catalyses 5-(methylsulfanyl)-D-ribulose 1-phosphate = 5-methylsulfanyl-2,3-dioxopentyl phosphate + H2O. Its pathway is amino-acid biosynthesis; L-methionine biosynthesis via salvage pathway; L-methionine from S-methyl-5-thio-alpha-D-ribose 1-phosphate: step 2/6. Functionally, catalyzes the dehydration of methylthioribulose-1-phosphate (MTRu-1-P) into 2,3-diketo-5-methylthiopentyl-1-phosphate (DK-MTP-1-P). The chain is Methylthioribulose-1-phosphate dehydratase from Geobacillus sp. (strain WCH70).